Here is an 867-residue protein sequence, read N- to C-terminus: DNA endonuclease RBBP8 (867 aa).

Residues 25–48 (ELWSKLKECHDKELQELLLKINKL) form an essential for binding to the MRN complex and for RPA focus formation on DNA damage region. Coiled coils occupy residues 38 to 87 (LQEL…EDRL) and 120 to 141 (ITEL…SEQL). Disordered regions lie at residues 141–171 (LHNM…PDSP) and 448–486 (RYGK…HSML). Over residues 154–166 (ENPADTGEGEDGV) the composition is skewed to acidic residues. The PXDLS motif motif lies at 489–493 (PLDLS). The segment at 508–531 (SSRGRTKQTFALVPEKPDPKKPLH) is damage-recruitment motif. A phosphothreonine mark is found at Thr817 and Thr829. The interval 843–867 (SPCQRPRRRQPYNAKFSSKIKEQKT) is disordered.

Belongs to the COM1/SAE2/CtIP family. As to quaternary structure, homotetramer; formed by antiparallel association of helical extensions protruding from the N-termini of two parallel coiled-coil dimers. Interacts with the MRN complex; the interaction links DNA sensing to resection. Interacts with samhd1. In terms of processing, phosphorylation at Thr-817 and Thr-829 promote interaction with nbn and recruitment to double-strand breaks (DSBs).

The protein resides in the nucleus. It is found in the chromosome. In terms of biological role, endonuclease that cooperates with the MRE11-RAD50-NBN (MRN) complex in DNA-end resection, the first step of double-strand break (DSB) repair through the homologous recombination (HR) pathway. Functions downstream of the MRN complex and ATM, promotes ATR activation and its recruitment to DSBs in the S/G2 phase facilitating the generation of ssDNA. Specifically promotes the endonuclease activity of the MRN complex to clear DNA ends containing protein adducts: recruited to DSBs by nbn following phosphorylation, and promotes the endonuclease of mre11 to clear protein-DNA adducts and generate clean double-strand break ends. In Xenopus tropicalis (Western clawed frog), this protein is DNA endonuclease RBBP8 (rbbp8).